Consider the following 507-residue polypeptide: Fumarate hydratase, mitochondrial (507 aa).

Residues 1-41 constitute a mitochondrion transit peptide; the sequence is MNRAFCLLARSRRFPRVPSAGAVLSGEAATLPRCAPNVVRM. 3 positions are modified to N6-acetyllysine; alternate: K58, K63, and K77. N6-succinyllysine; alternate is present on residues K58, K63, and K77. Phosphothreonine is present on T82. K91 bears the N6-acetyllysine mark. N6-acetyllysine; alternate occurs at positions 112 and 119. An N6-succinyllysine; alternate mark is found at K112 and K119. Substrate-binding positions include 142 to 144, 173 to 176, and 183 to 185; these read SGT, HPND, and SSN. K210 is modified (N6-acetyllysine). Residue K220 is modified to N6-acetyllysine; alternate. K220 is subject to N6-succinyllysine; alternate. T231 contacts substrate. The active-site Proton donor/acceptor is the H232. Phosphothreonine is present on T233. Residue K289 is modified to N6-acetyllysine; alternate. N6-succinyllysine; alternate is present on K289. The active site involves S362. Substrate contacts are provided by residues S363 and 368–370; that span reads KVN. S363 bears the Phosphoserine mark. N6-succinyllysine is present on residues K464 and K470. K499 is modified (N6-acetyllysine).

Belongs to the class-II fumarase/aspartase family. Fumarase subfamily. In terms of assembly, homotetramer. Interacts with H2AZ1. Phosphorylation at Thr-233 by PRKDC in response to DNA damage promotes translocation to the nucleus and recruitment to DNA double-strand breaks (DSBs).

The protein localises to the mitochondrion. It localises to the cytoplasm. The protein resides in the cytosol. It is found in the nucleus. Its subcellular location is the chromosome. It catalyses the reaction (S)-malate = fumarate + H2O. Its pathway is carbohydrate metabolism; tricarboxylic acid cycle; (S)-malate from fumarate: step 1/1. In terms of biological role, catalyzes the reversible stereospecific interconversion of fumarate to L-malate. Experiments in other species have demonstrated that specific isoforms of this protein act in defined pathways and favor one direction over the other. Its function is as follows. Catalyzes the hydration of fumarate to L-malate in the tricarboxylic acid (TCA) cycle to facilitate a transition step in the production of energy in the form of NADH. Catalyzes the dehydration of L-malate to fumarate. Fumarate metabolism in the cytosol plays a role during urea cycle and arginine metabolism; fumarate being a by-product of the urea cycle and amino-acid catabolism. Also plays a role in DNA repair by promoting non-homologous end-joining (NHEJ). In response to DNA damage and phosphorylation by PRKDC, translocates to the nucleus and accumulates at DNA double-strand breaks (DSBs): acts by catalyzing formation of fumarate, an inhibitor of KDM2B histone demethylase activity, resulting in enhanced dimethylation of histone H3 'Lys-36' (H3K36me2). The protein is Fumarate hydratase, mitochondrial of Rattus norvegicus (Rat).